The sequence spans 363 residues: Dihydroorotate dehydrogenase (quinone) (363 aa).

Residues 62–66 and threonine 86 contribute to the FMN site; that span reads AGYDK. Lysine 66 is a substrate binding site. 111-115 is a substrate binding site; it reads NRLGF. Asparagine 140 and asparagine 171 together coordinate FMN. Substrate is bound at residue asparagine 171. Serine 174 (nucleophile) is an active-site residue. Residue asparagine 176 participates in substrate binding. Lysine 216 and serine 244 together coordinate FMN. 245-246 provides a ligand contact to substrate; that stretch reads NT. FMN is bound by residues glycine 267, glycine 296, and 317–318; that span reads YS.

This sequence belongs to the dihydroorotate dehydrogenase family. Type 2 subfamily. Monomer. FMN is required as a cofactor.

Its subcellular location is the cell membrane. The enzyme catalyses (S)-dihydroorotate + a quinone = orotate + a quinol. The protein operates within pyrimidine metabolism; UMP biosynthesis via de novo pathway; orotate from (S)-dihydroorotate (quinone route): step 1/1. Functionally, catalyzes the conversion of dihydroorotate to orotate with quinone as electron acceptor. The polypeptide is Dihydroorotate dehydrogenase (quinone) (Allorhizobium ampelinum (strain ATCC BAA-846 / DSM 112012 / S4) (Agrobacterium vitis (strain S4))).